The chain runs to 268 residues: UPF0739 protein C1orf74 homolog (268 aa).

Belongs to the UPF0739 family.

The chain is UPF0739 protein C1orf74 homolog from Salmo salar (Atlantic salmon).